Reading from the N-terminus, the 188-residue chain is Deoxycytidylate deaminase (188 aa).

The region spanning 1–171 (MKASTVLQIA…DILRNAGIEV (171 aa)) is the CMP/dCMP-type deaminase domain. Cysteine 19, cysteine 49, histidine 94, glutamate 102, and histidine 104 together coordinate Zn(2+). Glutamate 106 (proton donor) is an active-site residue. Cysteine 132 and cysteine 135 together coordinate Zn(2+).

The protein belongs to the cytidine and deoxycytidylate deaminase family. In terms of assembly, homohexamer. Requires Zn(2+) as cofactor.

It carries out the reaction dCMP + H2O + H(+) = dUMP + NH4(+). Allosteric enzyme whose activity is greatly influenced by the end products of its metabolic pathway, dCTP and dTTP. Functionally, supplies the nucleotide substrate for thymidylate synthetase. This is Deoxycytidylate deaminase (CD) from Enterobacteria phage T2 (Bacteriophage T2).